A 112-amino-acid chain; its full sequence is Ribonuclease P protein component (112 aa).

This sequence belongs to the RnpA family. In terms of assembly, consists of a catalytic RNA component (M1 or rnpB) and a protein subunit.

The catalysed reaction is Endonucleolytic cleavage of RNA, removing 5'-extranucleotides from tRNA precursor.. RNaseP catalyzes the removal of the 5'-leader sequence from pre-tRNA to produce the mature 5'-terminus. It can also cleave other RNA substrates such as 4.5S RNA. The protein component plays an auxiliary but essential role in vivo by binding to the 5'-leader sequence and broadening the substrate specificity of the ribozyme. This chain is Ribonuclease P protein component, found in Pelotomaculum thermopropionicum (strain DSM 13744 / JCM 10971 / SI).